We begin with the raw amino-acid sequence, 215 residues long: Cytochrome b6 (215 aa).

Residues 32–52 (IFYCLGGITLTCFIVQVATGF) form a helical membrane-spanning segment. Cysteine 35 lines the heme c pocket. Heme b contacts are provided by histidine 86 and histidine 100. Transmembrane regions (helical) follow at residues 90–110 (ASMM…TGGF), 116–136 (LTWI…VTGY), and 186–206 (LHTF…FLMI). Residues histidine 187 and histidine 202 each coordinate heme b.

This sequence belongs to the cytochrome b family. PetB subfamily. In terms of assembly, the 4 large subunits of the cytochrome b6-f complex are cytochrome b6, subunit IV (17 kDa polypeptide, PetD), cytochrome f and the Rieske protein, while the 4 small subunits are PetG, PetL, PetM and PetN. The complex functions as a dimer. Requires heme b as cofactor. The cofactor is heme c.

It is found in the plastid. It localises to the chloroplast thylakoid membrane. Component of the cytochrome b6-f complex, which mediates electron transfer between photosystem II (PSII) and photosystem I (PSI), cyclic electron flow around PSI, and state transitions. This is Cytochrome b6 from Chara vulgaris (Common stonewort).